Here is a 443-residue protein sequence, read N- to C-terminus: Autophagy-related protein 13 homolog (443 aa).

2 disordered regions span residues 232-283 and 308-333; these read AKKR…EEDH and ANGT…KEPT. The segment covering 240–253 has biased composition (polar residues); that stretch reads SVESATSAGSSTSR. Positions 268 to 283 are enriched in basic and acidic residues; it reads EDSRHSDVQNSYEEDH. Residues 308-325 show a composition bias toward polar residues; the sequence is ANGTKKNSSSTCLNSPKS.

The protein belongs to the ATG13 family. Metazoan subfamily. In terms of assembly, interacts with unc-51 (via C-terminus). Interacts with lgg-1; the interaction is direct.

It localises to the cytoplasm. It is found in the cytosol. The protein resides in the preautophagosomal structure. The protein localises to the perikaryon. Its subcellular location is the cell projection. It localises to the axon. Functionally, component of the unc-51/atg-13 complex required for autophagosome formation. Required for the degradation of germ cell specific P-granule components such as sepa-1 by autophagy in somatic cells. This ensures exclusive localization of the P-granules in germ cells. May function downstream of the let-363 (Tor) signaling pathway to mediate sepa-1 degradation. Plays a role in survival during limited food availability. This is Autophagy-related protein 13 homolog from Caenorhabditis elegans.